Reading from the N-terminus, the 188-residue chain is Probable thiol:disulfide interchange protein DsbE-2 (188 aa).

Residues 1–11 lie on the Cytoplasmic side of the membrane; the sequence is MSMLHQQKRKN. A helical membrane pass occupies residues 12–32; the sequence is HFVFLPLVILLAVCALLFIGL. Topologically, residues 33-188 are periplasmic; sequence QQDPQKIASA…KLEAENAKVR (156 aa). One can recognise a Thioredoxin domain in the interval 42 to 179; sequence ALIGKPVPTF…QEMFIPEWQK (138 aa). Cysteines 82 and 85 form a disulfide.

It belongs to the thioredoxin family. DsbE subfamily.

It is found in the cell inner membrane. Could be involved in disulfide bond formation. Could catalyzes a late, reductive step in the assembly of periplasmic NrfA c-type cytochrome, probably the reduction of disulfide bonds of the apocytochrome c to allow covalent linkage with the heme. Possible subunit of a heme lyase. In Pasteurella multocida (strain Pm70), this protein is Probable thiol:disulfide interchange protein DsbE-2 (nrfX).